A 247-amino-acid polypeptide reads, in one-letter code: MADS-box transcription factor 1 (247 aa).

An MADS-box domain is found at 1 to 61 (MGRGRVELKR…GKLYEFCSTS (61 aa)). The K-box domain occupies 91–181 (ELSSQQEYLK…RQRMEGYQIN (91 aa)).

Expressed abundantly in the seed coat and to lesser extent in young buds, carpels, petals, and stamen.

It is found in the nucleus. Its function is as follows. Probable transcription factor. This is MADS-box transcription factor 1 from Pisum sativum (Garden pea).